A 393-amino-acid chain; its full sequence is MNDVFLKALPVLQKLTTAGFEAYFVGGSVRDYLLNRTISDVDIATSAFPEEVKEIFQSTYDTGIAHGTVTVRENNEFYEVTTFRTEGTYEDFRRPSEVKFIRSLEEDLQRRDFTMNAIAMDEHFALHDPFSGQEAIKNKAIKAVGKASERFHEDALRMMRGVRFLSQLDFQLDSETEKALESQIGLLQHTSVERITVEWLKMIKGPAIRRAMDLLLKVEMETYLPGLKGEKKALTEFGSWDWGKRTTDDAIWLGLVVTVQPNNVNAFLKAWKLPNKTIQLVSKAYQYALKMKETWLAEELYHAGKAVFSLVNELNIIRGKENNQHKLSQAYEALPIHSKKDLAITGADLLKWSGESAGPWVKETLDKLECGVLCNEINNEKNQIKRWLGYHEE.

ATP contacts are provided by G27 and R30. Residues G27 and R30 each coordinate CTP. 2 residues coordinate Mg(2+): D40 and D42. The ATP site is built by R111, D154, R157, R160, and R163. CTP contacts are provided by R111, D154, R157, R160, and R163.

Belongs to the tRNA nucleotidyltransferase/poly(A) polymerase family. Bacterial CCA-adding enzyme type 3 subfamily. In terms of assembly, homodimer. Mg(2+) serves as cofactor.

It carries out the reaction a tRNA precursor + 2 CTP + ATP = a tRNA with a 3' CCA end + 3 diphosphate. It catalyses the reaction a tRNA with a 3' CCA end + 2 CTP + ATP = a tRNA with a 3' CCACCA end + 3 diphosphate. Functionally, catalyzes the addition and repair of the essential 3'-terminal CCA sequence in tRNAs without using a nucleic acid template. Adds these three nucleotides in the order of C, C, and A to the tRNA nucleotide-73, using CTP and ATP as substrates and producing inorganic pyrophosphate. tRNA 3'-terminal CCA addition is required both for tRNA processing and repair. Also involved in tRNA surveillance by mediating tandem CCA addition to generate a CCACCA at the 3' terminus of unstable tRNAs. While stable tRNAs receive only 3'-terminal CCA, unstable tRNAs are marked with CCACCA and rapidly degraded. The protein is CCA-adding enzyme of Listeria monocytogenes serovar 1/2a (strain ATCC BAA-679 / EGD-e).